A 590-amino-acid chain; its full sequence is Probable indole-3-acetic acid-amido synthetase GH3.1 (590 aa).

It belongs to the IAA-amido conjugating enzyme family.

Its function is as follows. Catalyzes the synthesis of indole-3-acetic acid (IAA)-amino acid conjugates, providing a mechanism for the plant to cope with the presence of excess auxin. This Arabidopsis thaliana (Mouse-ear cress) protein is Probable indole-3-acetic acid-amido synthetase GH3.1 (GH3.1).